An 87-amino-acid chain; its full sequence is Protein anon-73B1 (87 aa).

Residues 25–47 (LLIRYGLYVGALFQFVCISAAVL) form a helical membrane-spanning segment. Residues 52-87 (PDVNSNPETGEVTEREGEPVRTRLHKIRKLEKKKRR) are disordered. The segment covering 63 to 72 (VTEREGEPVR) has biased composition (basic and acidic residues). Residues 73-87 (TRLHKIRKLEKKKRR) are compositionally biased toward basic residues.

The protein belongs to the UPF0239 family.

The protein resides in the membrane. The polypeptide is Protein anon-73B1 (Drosophila erecta (Fruit fly)).